The primary structure comprises 334 residues: Beta-1,3-N-acetylglucosaminyltransferase radical fringe (334 aa).

The Cytoplasmic segment spans residues 1–6 (MSRVRR). A helical; Signal-anchor for type II membrane protein transmembrane segment spans residues 7–29 (VLCRACLALAAVLAVLLLLPLPL). Residues 30 to 334 (PLPLPLPRAP…MKNRGKEAFQ (305 aa)) lie on the Lumenal side of the membrane. Residue arginine 77 coordinates substrate. N-linked (GlcNAc...) asparagine glycosylation is present at asparagine 116. Intrachain disulfides connect cysteine 117–cysteine 128 and cysteine 146–cysteine 210. Aspartate 150 is a substrate binding site. Aspartate 151 contacts Mn(2+). Aspartate 240 is an active-site residue. Histidine 264 contributes to the Mn(2+) binding site. Residues cysteine 314 and cysteine 323 are joined by a disulfide bond.

This sequence belongs to the glycosyltransferase 31 family. Mn(2+) is required as a cofactor. As to expression, most abundantly expressed in adult brain. Expressed in most neurons of the brain but not in glial cells. Also detected to a lower extent in adult lung and kidney.

The protein resides in the golgi apparatus membrane. It catalyses the reaction 3-O-(alpha-L-fucosyl)-L-threonyl-[EGF-like domain protein] + UDP-N-acetyl-alpha-D-glucosamine = 3-O-(N-acetyl-beta-D-glucosaminyl-(1-&gt;3)-alpha-L-fucosyl)-L-threonyl-[EGF-like domain protein] + UDP + H(+). The enzyme catalyses 3-O-(alpha-L-fucosyl)-L-seryl-[EGF-like domain protein] + UDP-N-acetyl-alpha-D-glucosamine = 3-O-(N-acetyl-beta-D-glucosaminyl-(1-&gt;3)-alpha-L-fucosyl)-L-seryl-[EGF-like domain protein] + UDP + H(+). Glycosyltransferase that initiates the elongation of O-linked fucose residues attached to EGF-like repeats in the extracellular domain of Notch molecules. Modulates NOTCH1 activity by modifying O-fucose residues at specific EGF-like domains resulting in enhancement of NOTCH1 activation by DLL1 and JAG1. Inhibits Notch signaling in postmitotic neurons of the brain. It may play a role in adult brain and in neurogenesis. It may play a role in limb development. This is Beta-1,3-N-acetylglucosaminyltransferase radical fringe from Rattus norvegicus (Rat).